Consider the following 266-residue polypeptide: Elongator complex protein 6 (266 aa).

This sequence belongs to the ELP6 family. As to quaternary structure, component of the elongator complex which consists of ELP1, ELP2, ELP3, ELP4, ELP5 and ELP6.

It localises to the cytoplasm. It is found in the nucleus. It participates in tRNA modification; 5-methoxycarbonylmethyl-2-thiouridine-tRNA biosynthesis. In terms of biological role, component of the elongator complex which is required for multiple tRNA modifications, including mcm5U (5-methoxycarbonylmethyl uridine), mcm5s2U (5-methoxycarbonylmethyl-2-thiouridine), and ncm5U (5-carbamoylmethyl uridine). The elongator complex catalyzes formation of carboxymethyluridine in the wobble base at position 34 in tRNAs. Involved in cell migration. This Homo sapiens (Human) protein is Elongator complex protein 6.